The following is a 111-amino-acid chain: DNA-binding protein MTH_1615 (111 aa).

The protein belongs to the PDCD5 family.

Its function is as follows. DNA-binding protein which can interact with a randomly chosen 20-mer of double-stranded DNA. In Methanothermobacter thermautotrophicus (strain ATCC 29096 / DSM 1053 / JCM 10044 / NBRC 100330 / Delta H) (Methanobacterium thermoautotrophicum), this protein is DNA-binding protein MTH_1615.